The chain runs to 678 residues: Probable N-methylproline demethylase (678 aa).

Residues Gly59, Gln102, Arg220, Lys299, and 321–322 (TR) each bind FMN. [4Fe-4S] cluster-binding residues include Cys345, Cys351, and Cys363. FAD contacts are provided by Ala396, Glu415, Gln423, Arg433, and Ala460.

This sequence in the N-terminal section; belongs to the NADH:flavin oxidoreductase/NADH oxidase family. Requires FMN as cofactor. FAD is required as a cofactor. It depends on [4Fe-4S] cluster as a cofactor.

It catalyses the reaction N-methyl-L-proline + NAD(+) + H2O = L-proline + formaldehyde + NADH + H(+). The protein operates within amine and polyamine degradation; stachydrine degradation. Possible NADH-dependent oxidase, may function as a demethylase that converts N-methylproline to proline. The sequence is that of Probable N-methylproline demethylase from Rhizobium meliloti (strain 1021) (Ensifer meliloti).